A 274-amino-acid chain; its full sequence is Nitrogenase iron protein (274 aa).

8–15 is a binding site for ATP; the sequence is GKGGIGKS. C94 contacts [4Fe-4S] cluster. The residue at position 97 (R97) is an ADP-ribosylarginine; by dinitrogenase reductase ADP-ribosyltransferase. C131 serves as a coordination point for [4Fe-4S] cluster.

It belongs to the NifH/BchL/ChlL family. As to quaternary structure, homodimer. It depends on [4Fe-4S] cluster as a cofactor. The reversible ADP-ribosylation of Arg-97 inactivates the nitrogenase reductase and regulates nitrogenase activity.

The catalysed reaction is N2 + 8 reduced [2Fe-2S]-[ferredoxin] + 16 ATP + 16 H2O = H2 + 8 oxidized [2Fe-2S]-[ferredoxin] + 2 NH4(+) + 16 ADP + 16 phosphate + 6 H(+). The key enzymatic reactions in nitrogen fixation are catalyzed by the nitrogenase complex, which has 2 components: the iron protein and the molybdenum-iron protein. The sequence is that of Nitrogenase iron protein from Dehalococcoides mccartyi (strain ATCC BAA-2266 / KCTC 15142 / 195) (Dehalococcoides ethenogenes (strain 195)).